Here is a 662-residue protein sequence, read N- to C-terminus: ABC transporter G family member 25 (662 aa).

Residues 1–30 are disordered; it reads MSAFDGVENQMNGPDSSPRLSQDPREPRSL. The segment covering 9 to 20 has biased composition (polar residues); sequence NQMNGPDSSPRL. An N-linked (GlcNAc...) asparagine glycan is attached at Asn56. An ABC transporter domain is found at 69-308; sequence QKPSDETRST…FESVGFSPAF (240 aa). Residue 101-108 coordinates ATP; it reads GPSGSGKS. N-linked (GlcNAc...) asparagine glycosylation is present at Asn122. Helical transmembrane passes span 374-394, 406-426, 437-457, 489-509, 522-542, 547-567, and 629-649; these read VNGGGITTCIATWFSQLCILL, FDLLRIFQVVAASILCGLMWW, LGLLFFISIFWGVLPSFNAVF, LSMELVLPASFLTFTYWMVYL, VLLLYVLASQGLGLALGAAIM, ASTIVTVTMLAFVLTGGYYVN, and VIGDVGMWTSVGVLFLMFFGY. Residues 388-594 enclose the ABC transmembrane type-2 domain; sequence SQLCILLHRL…CYRLLVAIQY (207 aa).

The protein belongs to the ABC transporter superfamily. ABCG family. Eye pigment precursor importer (TC 3.A.1.204) subfamily. In terms of tissue distribution, mainly expressed in vascular tissues,predominantly in phloem companion cells, with highest levels in roots and seeds, and lower levels in seedlings, stems, leaves and flowers. Mostly observed in inflorescence meristems relative to cauline leaves and developing siliques. In seeds, mainly expressed in the endosperm and, to a lesser extent, in the embryo.

The protein localises to the cell membrane. It catalyses the reaction abscisate(in) + ATP + H2O = abscisate(out) + ADP + phosphate + H(+). Its activity is regulated as follows. ADP and vanadate (ABC transporters inhibitor) inhibit the ATP-dependent abscisic acid (ABA) uptake. In terms of biological role, high affinity abscisic acid (ABA) transporter that mediates the export of ABA, with a preference for (+)-ABA, through the plasma membrane, especially in vascular tissues (e.g. phloem companion cells), and is involved in the intercellular ABA signaling pathway. Together with ABCG31, export ABA from the endosperm to deliver it to the embryo via ABCG30 and ABCG40-mediated import to suppress radicle extension and subsequent embryonic growth. The polypeptide is ABC transporter G family member 25 (Arabidopsis thaliana (Mouse-ear cress)).